Here is a 142-residue protein sequence, read N- to C-terminus: Prefoldin subunit alpha 1 (142 aa).

The protein belongs to the prefoldin subunit alpha family. Heterohexamer of two alpha and four beta subunits.

The protein resides in the cytoplasm. In terms of biological role, molecular chaperone capable of stabilizing a range of proteins. Seems to fulfill an ATP-independent, HSP70-like function in archaeal de novo protein folding. The sequence is that of Prefoldin subunit alpha 1 (pfdA1) from Methanocaldococcus jannaschii (strain ATCC 43067 / DSM 2661 / JAL-1 / JCM 10045 / NBRC 100440) (Methanococcus jannaschii).